A 1191-amino-acid polypeptide reads, in one-letter code: Major DNA-binding protein (1191 aa).

A Required for filament formation motif is present at residues 820–821 (FW). Disordered stretches follow at residues 1122–1146 (TAAG…AADE) and 1168–1191 (AGLI…RSRL). Over residues 1127–1142 (AAGGGGSATEGGGGGA) the composition is skewed to gly residues. Positions 1173 to 1191 (GDDVRGDDEFELPSKRSRL) are required for nuclear localization.

It belongs to the herpesviridae major DNA-binding protein family. Homooligomers. Forms double-helical filaments necessary for the formation of replication compartments within the host nucleus. Interacts with the origin-binding protein. Interacts with the helicase primase complex; this interaction stimulates primer synthesis activity of the helicase-primase complex. Interacts with the DNA polymerase. Interacts with the alkaline exonuclease; this interaction increases its nuclease processivity.

It is found in the host nucleus. Functionally, single-stranded DNA-binding protein required for DNA replication. In terms of biological role, plays several crucial roles in viral infection. Participates in the opening of the viral DNA origin to initiate replication by interacting with the origin-binding protein. May disrupt loops, hairpins and other secondary structures present on ssDNA to reduce and eliminate pausing of viral DNA polymerase at specific sites during elongation. Promotes viral DNA recombination by performing strand-transfer, characterized by the ability to transfer a DNA strand from a linear duplex to a complementary single-stranded DNA circle. Can also catalyze the renaturation of complementary single strands. Additionally, reorganizes the host cell nucleus, leading to the formation of prereplicative sites and replication compartments. This process is driven by the protein which can form double-helical filaments in the absence of DNA. The protein is Major DNA-binding protein of Mus musculus (Mouse).